The following is a 121-amino-acid chain: Large ribosomal subunit protein uL18 (121 aa).

Belongs to the universal ribosomal protein uL18 family. As to quaternary structure, part of the 50S ribosomal subunit; part of the 5S rRNA/L5/L18/L25 subcomplex. Contacts the 5S and 23S rRNAs.

This is one of the proteins that bind and probably mediate the attachment of the 5S RNA into the large ribosomal subunit, where it forms part of the central protuberance. The protein is Large ribosomal subunit protein uL18 of Moorella thermoacetica (strain ATCC 39073 / JCM 9320).